The sequence spans 232 residues: Uracil-DNA glycosylase (232 aa).

The active-site Proton acceptor is Asp-64.

Belongs to the uracil-DNA glycosylase (UDG) superfamily. UNG family.

It is found in the cytoplasm. The catalysed reaction is Hydrolyzes single-stranded DNA or mismatched double-stranded DNA and polynucleotides, releasing free uracil.. Functionally, excises uracil residues from the DNA which can arise as a result of misincorporation of dUMP residues by DNA polymerase or due to deamination of cytosine. The sequence is that of Uracil-DNA glycosylase from Shouchella clausii (strain KSM-K16) (Alkalihalobacillus clausii).